We begin with the raw amino-acid sequence, 497 residues long: MSGSTRTGSASVLLVGLSFRSAPVTMLEQATVADADLPKMQLSLVDNDVISESLVLSTCNRMEFYTVANAFHSGLDHVVDTIAQFSGLQTAELEPHLYVHYADSAAEHMLKVASGLDSMVIGEQQIIGQLRSAYQSANETGTVGRTLHDLTQRALRTGKRVHSETAIDSAGASMVSFALDQALRYIEPARALSAVVDDAPLSQPLAGHRALIIGAGAMASLASTHLGKLGIDHVTVANRTLSRAENLVNHARQAGVDASAVPLDGVTDCLSAVDIVVSATGAVGNVVTEQDVRAAVGAAGGVASVAGRRGTKVMIDLSMPADIEHSVAEIDGVKLLNIEELTTMAGDRVQDESPARAIVADELQSFLEQQRAQSVVPTVKALRQKAGEVMAEELMALERLTPDMSEADRAAVVKSMKRVVDKLLHTPTVQAKKLSAGGQQVSYPDALAALFNLPNGMVDSVTQPGQADSSAAQTAGTSARADQIPSAARVGRVVREA.

Substrate contacts are provided by residues 58–61 (TCNR), Ser-118, 123–125 (EQQ), and Gln-129. Residue Cys-59 is the Nucleophile of the active site. 214 to 219 (GAGAMA) provides a ligand contact to NADP(+). Polar residues predominate over residues 461–477 (VTQPGQADSSAAQTAGT). Residues 461–486 (VTQPGQADSSAAQTAGTSARADQIPS) are disordered.

This sequence belongs to the glutamyl-tRNA reductase family. In terms of assembly, homodimer.

The enzyme catalyses (S)-4-amino-5-oxopentanoate + tRNA(Glu) + NADP(+) = L-glutamyl-tRNA(Glu) + NADPH + H(+). The protein operates within porphyrin-containing compound metabolism; protoporphyrin-IX biosynthesis; 5-aminolevulinate from L-glutamyl-tRNA(Glu): step 1/2. Functionally, catalyzes the NADPH-dependent reduction of glutamyl-tRNA(Glu) to glutamate 1-semialdehyde (GSA). This is Glutamyl-tRNA reductase from Corynebacterium jeikeium (strain K411).